A 1122-amino-acid polypeptide reads, in one-letter code: MSADSPRRHPSGVVGSGIGLGSGSGTGLGSGSTGGSKSGAAVPAIVPPQTVSDRSILDSAIGFINDVTLANQPVQDPKDTITWARFETCADVSDPRFGDDWELEGNAAPPLLLILGYGLGVQVWAIPANGEAVEVLSWRHGVVTALRVLPTPATAAALDENGRADEPVDSFAEKRPLVAFVDGGSAAASGLLAGSSGLGLGGGGGGVTTVGGSVGGVSGIGVSASAQFSAVNFMSLKTGVQVKTIKFKNAVLDIQANRSAVVITFHERIAVFDARTLEDRLTITTCYPSPGINPNPIALGPRWLAYAEHKLLHSKRSGGGCDGEGVPSYTATVLNAAKSLSKGLREFGEQVAAGLTGTTAGSGASSKSSSFDSASGGPDAKQSGVVTIIDVKHPVKDYSPTSGTPLSSTAGSQGGGDPIVAHFVAHSEALVAMEFDSSGMLLLTADRRGHDFHVFRVQPHPVGPSLAAVHHLYVLHRGDTSAKVQHIAFSLDSRWAAVSTLRGTTHVFPITPYGGAMGVRTHTSLHVVNKLSRFHRSAGLGADGRSSSPISHSESTTFVQSLQPYHNPTLPPYPRPSVVQPLAQLRQPFTLGSPPGSAGLGGGVGGGGVMGSGVSAGGHGVGVGVGSNSQRQRQRLSSLSDDSGKPLSVCSIFAKSRSWLLEPPMATREQPHRVQRKAVDSLFVMAGHGALIQYDLDTKLASHVAKEKICDDTPIELEVEARAQWNLGRRKDGSQEIAPPLGLDNWLIKDRHASLLLDSANQFDDPDERTESWLAQVEIITHAGPHRRLWMGPQFVFKNYNTPSGSNLNHVDAEAVEIGVSKTTTTTLPSTAASSALGLGTIIGKDRSSPLNMPLSAATSVGGAGIGSSAVTGRSGAGVPVLIESGSYSSIEQSPKLMDRFRHGHLDSDYGHGDTRLKEDLADAMRESPSTAAARRETTGNYFTTDQLDGLALNNNNNINNNIIPTKDNASPNPNTNTNPNAIPSSNKVQKAEVTDAVDYPIRHSYGDHGELSTVVNIEVFDDQLSMSSISTNSRLSLEGPPSQSSPPLSLTNGLMDTNLMHFSESVTGTGVAQAQVHGRGANRFEVDDDDEEEEEEEEELDEEAEPDDDEREDRPLGRRNL.

Residues 1-41 are disordered; that stretch reads MSADSPRRHPSGVVGSGIGLGSGSGTGLGSGSTGGSKSGAA. Positions 14–37 are enriched in gly residues; sequence VGSGIGLGSGSGTGLGSGSTGGSK. Serine 55 is subject to Phosphoserine. 4 stretches are compositionally biased toward low complexity: residues 357-377, 626-641, 966-987, and 1036-1051; these read GTTAGSGASSKSSSFDSASGG, GSNSQRQRQRLSSLSD, TKDNASPNPNTNTNPNAIPSSN, and LSLEGPPSQSSPPLSL. 5 disordered regions span residues 357-382, 620-644, 966-990, 1033-1054, and 1071-1122; these read GTTAGSGASSKSSSFDSASGGPDAKQ, GVGVGVGSNSQRQRQRLSSLSDDSG, TKDNASPNPNTNTNPNAIPSSNKVQ, NSRLSLEGPPSQSSPPLSLTNG, and GVAQ…RRNL. The residue at position 638 (serine 638) is a Phosphoserine. Residues 1087-1112 are compositionally biased toward acidic residues; that stretch reads VDDDDEEEEEEEEELDEEAEPDDDER. Positions 1113-1122 are enriched in basic and acidic residues; it reads EDRPLGRRNL.

The protein belongs to the BCAS3 family. Expressed in all postembryonic pericardial cells, but not in cardioblasts. Also expressed in Garland cells in third instar larvae (at protein level).

The protein localises to the cytoplasm. In terms of biological role, regulates macropinocytosis in pericardial cells. The chain is Breast carcinoma-amplified sequence 3 homolog (rudhira) from Drosophila melanogaster (Fruit fly).